The sequence spans 879 residues: Oxysterol-binding protein-related protein 5 (879 aa).

Residues 1 to 73 (MKEEAFLRRR…TPSSATKVPP (73 aa)) form a disordered region. Ser12 bears the Phosphoserine mark. Positions 93 to 123 (VTKKETLKAQKENYRQEKKRATRQLLSALTD) form a coiled coil. Residues 126-243 (VVIMADSLKI…WLDALELALR (118 aa)) form the PH domain. The tract at residues 254-341 (KPGRDGEPGT…TPGAPVRRGT (88 aa)) is disordered. Basic and acidic residues-rich tracts occupy residues 300–309 (FSDKSERENP) and 316–325 (TQDHSRKTES). A 1,2-diacyl-sn-glycero-3-phospho-(1D-myo-inositol 4-phosphate) is bound by residues 384 to 389 (LSRVVL), 446 to 449 (KPYN), and 478 to 479 (HH). A 1,2-diacyl-sn-glycero-3-phospho-L-serine-binding positions include 384-389 (LSRVVL) and Asn449. Ser504 serves as a coordination point for a 1,2-diacyl-sn-glycero-3-phospho-L-serine. Lys670, Glu674, and Arg678 together coordinate a 1,2-diacyl-sn-glycero-3-phospho-(1D-myo-inositol 4-phosphate). The interval 742-806 (TTFLGSPGPR…FVPGGESPCP (65 aa)) is disordered. Ser747 carries the post-translational modification Phosphoserine. Over residues 750-765 (PRHERSGPDQRLRKAS) the composition is skewed to basic and acidic residues. The span at 766-783 (DQPSGHSQATESSGSTPE) shows a compositional bias: polar residues. The helical transmembrane segment at 860-878 (SWFLLCVFLACQLFINHIL) threads the bilayer.

It belongs to the OSBP family. As to expression, ubiquitously expressed.

The protein localises to the endoplasmic reticulum membrane. Its function is as follows. Lipid transporter involved in lipid countertransport between the endoplasmic reticulum and the plasma membrane: specifically exchanges phosphatidylserine with phosphatidylinositol 4-phosphate (PI4P), delivering phosphatidylserine to the plasma membrane in exchange for PI4P, which is degraded by the SAC1/SACM1L phosphatase in the endoplasmic reticulum. Binds phosphatidylserine and PI4P in a mutually exclusive manner. May cooperate with NPC1 to mediate the exit of cholesterol from endosomes/lysosomes. Binds 25-hydroxycholesterol and cholesterol. This chain is Oxysterol-binding protein-related protein 5 (OSBPL5), found in Homo sapiens (Human).